The following is a 92-amino-acid chain: Small ribosomal subunit protein uS19 (92 aa).

It belongs to the universal ribosomal protein uS19 family.

Its function is as follows. Protein S19 forms a complex with S13 that binds strongly to the 16S ribosomal RNA. This is Small ribosomal subunit protein uS19 from Cellvibrio japonicus (strain Ueda107) (Pseudomonas fluorescens subsp. cellulosa).